A 303-amino-acid polypeptide reads, in one-letter code: UDP-3-O-acyl-N-acetylglucosamine deacetylase (303 aa).

Positions 78, 237, and 241 each coordinate Zn(2+). Catalysis depends on H264, which acts as the Proton donor.

The protein belongs to the LpxC family. The cofactor is Zn(2+).

The enzyme catalyses a UDP-3-O-[(3R)-3-hydroxyacyl]-N-acetyl-alpha-D-glucosamine + H2O = a UDP-3-O-[(3R)-3-hydroxyacyl]-alpha-D-glucosamine + acetate. Its pathway is glycolipid biosynthesis; lipid IV(A) biosynthesis; lipid IV(A) from (3R)-3-hydroxytetradecanoyl-[acyl-carrier-protein] and UDP-N-acetyl-alpha-D-glucosamine: step 2/6. Catalyzes the hydrolysis of UDP-3-O-myristoyl-N-acetylglucosamine to form UDP-3-O-myristoylglucosamine and acetate, the committed step in lipid A biosynthesis. The sequence is that of UDP-3-O-acyl-N-acetylglucosamine deacetylase from Azotobacter vinelandii (strain DJ / ATCC BAA-1303).